Reading from the N-terminus, the 498-residue chain is Angiopoietin-1 (498 aa).

The N-terminal stretch at 1–19 (MTVFLSFAFLAAILTHIGC) is a signal peptide. 5 N-linked (GlcNAc...) asparagine glycosylation sites follow: N92, N122, N154, N243, and N295. Residues 158 to 254 (RLEIQLLENS…SVLQKQQLEL (97 aa)) adopt a coiled-coil conformation. Residues 277-497 (KEEVKPFRDC…STTMMIRPLD (221 aa)) form the Fibrinogen C-terminal domain. 2 disulfide bridges follow: C286-C315 and C439-C452.

As to quaternary structure, homooligomer. Interacts with TEK/TIE2. Interacts with SVEP1/polydom. Interacts with THBD; this interaction significantly inhibits the generation of activated PC and TAFIa/CPB2 by the thrombin/thrombomodulin complex.

Its subcellular location is the secreted. Binds and activates TIE2 receptor by inducing its tyrosine phosphorylation. Implicated in endothelial developmental processes later and distinct from that of VEGF. Appears to play a crucial role in mediating reciprocal interactions between the endothelium and surrounding matrix and mesenchyme. Mediates blood vessel maturation/stability. It may play an important role in the heart early development. The sequence is that of Angiopoietin-1 (ANGPT1) from Sus scrofa (Pig).